Here is a 129-residue protein sequence, read N- to C-terminus: Succinate dehydrogenase cytochrome b556 subunit (129 aa).

Residues 1 to 26 (MIRNVKKQRPVNLDLQTIRFPITAIA) are Cytoplasmic-facing. Residues 27-52 (SILHRVSGVITFVAVGILLWLLGTSL) traverse the membrane as a helical segment. Residues 53 to 68 (SSPEGFEQASAIMGSF) lie on the Periplasmic side of the membrane. A helical transmembrane segment spans residues 69–89 (FVKFIMWGILTALAYHVVVGI). H84 lines the heme pocket. Residues 90–108 (RHMMMDFGYLEETFEAGKR) are Cytoplasmic-facing. The chain crosses the membrane as a helical span at residues 109 to 129 (SAKISFVITVVLSLLAGVLVW).

It belongs to the cytochrome b560 family. In terms of assembly, part of an enzyme complex containing four subunits: a flavoprotein, an iron-sulfur protein, plus two membrane-anchoring proteins, SdhC and SdhD. The complex can form homotrimers. Heme serves as cofactor.

The protein resides in the cell inner membrane. The protein operates within carbohydrate metabolism; tricarboxylic acid cycle. In terms of biological role, membrane-anchoring subunit of succinate dehydrogenase (SDH). This Escherichia coli O157:H7 protein is Succinate dehydrogenase cytochrome b556 subunit (sdhC).